A 503-amino-acid polypeptide reads, in one-letter code: Probable cytosol aminopeptidase (503 aa).

Residues lysine 272 and aspartate 277 each coordinate Mn(2+). Lysine 284 is a catalytic residue. 3 residues coordinate Mn(2+): aspartate 295, aspartate 354, and glutamate 356. Residue arginine 358 is part of the active site.

Belongs to the peptidase M17 family. Mn(2+) serves as cofactor.

The protein localises to the cytoplasm. The catalysed reaction is Release of an N-terminal amino acid, Xaa-|-Yaa-, in which Xaa is preferably Leu, but may be other amino acids including Pro although not Arg or Lys, and Yaa may be Pro. Amino acid amides and methyl esters are also readily hydrolyzed, but rates on arylamides are exceedingly low.. It catalyses the reaction Release of an N-terminal amino acid, preferentially leucine, but not glutamic or aspartic acids.. Its function is as follows. Presumably involved in the processing and regular turnover of intracellular proteins. Catalyzes the removal of unsubstituted N-terminal amino acids from various peptides. The polypeptide is Probable cytosol aminopeptidase (Chlorobium limicola (strain DSM 245 / NBRC 103803 / 6330)).